We begin with the raw amino-acid sequence, 521 residues long: Formate--tetrahydrofolate ligase (521 aa).

It belongs to the formate--tetrahydrofolate ligase family.

It catalyses the reaction (6S)-5,6,7,8-tetrahydrofolate + formate + ATP = (6R)-10-formyltetrahydrofolate + ADP + phosphate. It functions in the pathway one-carbon metabolism; tetrahydrofolate interconversion. The chain is Formate--tetrahydrofolate ligase from Ureaplasma parvum serovar 3 (strain ATCC 700970).